We begin with the raw amino-acid sequence, 258 residues long: Thrombin-like enzyme CPI-enzyme 2 (258 aa).

A signal peptide spans 1-18 (MVLIRVLANLLILQLSYA). A propeptide spanning residues 19 to 24 (QKSSEL) is cleaved from the precursor. Residues 25-249 (VIGGDECNIN…YTDWIENIIA (225 aa)) form the Peptidase S1 domain. Disulfide bonds link C31–C163, C50–C66, C98–C256, C142–C210, C174–C189, and C200–C225. N44 carries an N-linked (GlcNAc...) asparagine glycan. The Charge relay system role is filled by H65. 2 N-linked (GlcNAc...) asparagine glycosylation sites follow: N79 and N103. Catalysis depends on D110, which acts as the Charge relay system. An N-linked (GlcNAc...) asparagine glycan is attached at N121. Residue S204 is the Charge relay system of the active site.

It belongs to the peptidase S1 family. Snake venom subfamily. Monomer. N-glycosylated. In terms of tissue distribution, expressed by the venom gland.

It is found in the secreted. Its function is as follows. Thrombin-like snake venom serine protease that cleaves fibrinogen beta (FGB) releasing fibrinopeptide B. Promotes capillary permeability-increasing activity through the release of peptides from the beta-chain of fibrinogen. The chain is Thrombin-like enzyme CPI-enzyme 2 from Gloydius ussuriensis (Ussuri mamushi).